The following is a 355-amino-acid chain: MSTERRASSNPMTNEENAMFLDILHEAPLFGHRKSRSLVGSYLYMLLLAGYAILAAGAPWMFHRVQQLTPSLLCCCDVALLVVTGVFQQYFVYQVQKIRLQGYYSFSQKLKHVVRLPFAIAAYGTAAMLLVIVWRPQIHILSISSLQRIIMLVEAVGAGFFMGLYIGYVHQYNSVNSRPDVLKSLYSPLQPSSSMEGLRYYEGRLSDQQTALLQYQRENLHFLSEEILCLQEKLSKYEQSDDGSTPQVDLAHLLAARDQELRTLSAEMNQLQSELRLARSLIAERDAEVQRVNSTNNQYIEENERLRAILSEWSMRAANLERALEVERMSNSELQKEVASTRRKQMLETTTSEQP.

4 consecutive transmembrane segments (helical) span residues Y42 to F62, L72 to V92, V113 to V133, and I149 to V169. The stretch at L220 to E337 forms a coiled coil. Positions N331–S340 are enriched in basic and acidic residues. Residues N331–P355 form a disordered region.

It belongs to the TMEM192 family. As to quaternary structure, interacts with FRI.

Its subcellular location is the membrane. In Arabidopsis thaliana (Mouse-ear cress), this protein is Protein FIP1.